A 92-amino-acid chain; its full sequence is Small ribosomal subunit protein uS19 (92 aa).

Belongs to the universal ribosomal protein uS19 family.

Its function is as follows. Protein S19 forms a complex with S13 that binds strongly to the 16S ribosomal RNA. This chain is Small ribosomal subunit protein uS19, found in Polaromonas naphthalenivorans (strain CJ2).